A 130-amino-acid polypeptide reads, in one-letter code: Protein ApaG (130 aa).

The region spanning Arg3 to Arg127 is the ApaG domain. Residues Glu63–Glu83 form a disordered region.

This is Protein ApaG from Rhizobium etli (strain ATCC 51251 / DSM 11541 / JCM 21823 / NBRC 15573 / CFN 42).